The primary structure comprises 341 residues: Retinol dehydrogenase 10-A (341 aa).

The helical; Signal-anchor transmembrane segment at 3-23 (IVLEFFLVTFRVLWAFVLAAG) threads the bilayer. 40–64 (LITGAGSGLGRLFALEFARRRAQLV) serves as a coordination point for NADP(+). Ser-197 is a binding site for substrate. The active-site Proton acceptor is Tyr-210.

The protein belongs to the short-chain dehydrogenases/reductases (SDR) family.

Its subcellular location is the microsome membrane. The protein resides in the endoplasmic reticulum membrane. It carries out the reaction all-trans-retinol + NADP(+) = all-trans-retinal + NADPH + H(+). It participates in cofactor metabolism; retinol metabolism. Functionally, retinol dehydrogenase with a clear preference for NADP. Converts all-trans-retinol to all-trans-retinal. Has no detectable activity towards 11-cis-retinol, 9-cis-retinol and 13-cis-retinol. The protein is Retinol dehydrogenase 10-A (rdh10-a) of Xenopus laevis (African clawed frog).